Here is a 333-residue protein sequence, read N- to C-terminus: Biotin synthase (333 aa).

A Radical SAM core domain is found at 47 to 276 (FFKNQMEFCS…KSEIRLCGGR (230 aa)). [4Fe-4S] cluster contacts are provided by Cys-65, Cys-69, and Cys-72. Residues Cys-109, Cys-141, Cys-201, and Arg-271 each coordinate [2Fe-2S] cluster.

This sequence belongs to the radical SAM superfamily. Biotin synthase family. As to quaternary structure, homodimer. The cofactor is [4Fe-4S] cluster. It depends on [2Fe-2S] cluster as a cofactor.

The enzyme catalyses (4R,5S)-dethiobiotin + (sulfur carrier)-SH + 2 reduced [2Fe-2S]-[ferredoxin] + 2 S-adenosyl-L-methionine = (sulfur carrier)-H + biotin + 2 5'-deoxyadenosine + 2 L-methionine + 2 oxidized [2Fe-2S]-[ferredoxin]. Its pathway is cofactor biosynthesis; biotin biosynthesis; biotin from 7,8-diaminononanoate: step 2/2. Functionally, catalyzes the conversion of dethiobiotin (DTB) to biotin by the insertion of a sulfur atom into dethiobiotin via a radical-based mechanism. The chain is Biotin synthase from Sulfurihydrogenibium sp. (strain YO3AOP1).